The sequence spans 473 residues: Trehalose-6-phosphate synthase (473 aa).

Residue arginine 10 coordinates D-glucose 6-phosphate. Residue 21 to 22 (GG) participates in UDP-alpha-D-glucose binding. D-glucose 6-phosphate-binding residues include tyrosine 76 and aspartate 130. UDP-alpha-D-glucose contacts are provided by arginine 262 and lysine 267. Arginine 300 lines the D-glucose 6-phosphate pocket. UDP-alpha-D-glucose is bound by residues phenylalanine 339 and 365–369 (LVAKE). Residues 454–473 (TPRSPERQQQNNVATFPKLA) are disordered.

Belongs to the glycosyltransferase 20 family. Homotetramer.

It carries out the reaction D-glucose 6-phosphate + UDP-alpha-D-glucose = alpha,alpha-trehalose 6-phosphate + UDP + H(+). It participates in glycan biosynthesis; trehalose biosynthesis. In terms of biological role, probably involved in the osmoprotection via the biosynthesis of trehalose. Catalyzes the transfer of glucose from UDP-alpha-D-glucose (UDP-Glc) to D-glucose 6-phosphate (Glc-6-P) to form trehalose-6-phosphate. Acts with retention of the anomeric configuration of the UDP-sugar donor. This Salmonella paratyphi A (strain ATCC 9150 / SARB42) protein is Trehalose-6-phosphate synthase.